Here is a 252-residue protein sequence, read N- to C-terminus: 5-oxoprolinase subunit A 1 (252 aa).

This sequence belongs to the LamB/PxpA family. In terms of assembly, forms a complex composed of PxpA, PxpB and PxpC.

It carries out the reaction 5-oxo-L-proline + ATP + 2 H2O = L-glutamate + ADP + phosphate + H(+). In terms of biological role, catalyzes the cleavage of 5-oxoproline to form L-glutamate coupled to the hydrolysis of ATP to ADP and inorganic phosphate. The polypeptide is 5-oxoprolinase subunit A 1 (Pseudomonas putida (strain ATCC 47054 / DSM 6125 / CFBP 8728 / NCIMB 11950 / KT2440)).